Here is a 339-residue protein sequence, read N- to C-terminus: Trace amine-associated receptor 1 (339 aa).

At 1–24 (MMPFCHNIINISCVKNNWSNDVRA) the chain is on the extracellular side. Disulfide bonds link C5–C178, C13–C88, and C96–C182. Residues N10 and N17 are each glycosylated (N-linked (GlcNAc...) asparagine). The chain crosses the membrane as a helical span at residues 25–49 (SLYSLMVLIILTTLVGNLIVIVSIS). At 50-59 (HFKQLHTPTN) the chain is on the cytoplasmic side. The chain crosses the membrane as a helical span at residues 60–81 (WLIHSMATVDFLLGCLVMPYSM). Over 82 to 96 (VRSAEHCWYFGEVFC) the chain is Extracellular. The helical transmembrane segment at 97–119 (KIHTSTDIMLSSASIFHLSFISI) threads the bilayer. Position 103 (D103) interacts with 2-phenylethylamine. Residues 120–139 (DRYYAVCDPLRYKAKMNILV) lie on the Cytoplasmic side of the membrane. The helical transmembrane segment at 140–161 (ICVMIFISWSVPAVFAFGMIFL) threads the bilayer. The Extracellular portion of the chain corresponds to 162–188 (ELNFKGAEEIYYKHVHCRGGCSVFFSK). Residues 175-186 (HVHCRGGCSVFF) are extracellular Loop 2 (ECL2). A helical membrane pass occupies residues 189-211 (ISGVLTFMTSFYIPGSIMLCVYY). Over 212–249 (RIYLIAKEQARLISDANQKLQIGLEMKNGISQSKERKA) the chain is Cytoplasmic. The chain crosses the membrane as a helical span at residues 250–273 (VKTLGIVMGVFLICWCPFFICTVM). Topologically, residues 274 to 286 (DPFLHYIIPPTLN) are extracellular. Residues 287-307 (DVLIWFGYLNSTFNPMVYAFF) form a helical membrane-spanning segment. Residues 308 to 339 (YPWFRKALKMMLFGKIFQKDSSRCKLFLELSS) are Cytoplasmic-facing.

It belongs to the G-protein coupled receptor 1 family. As to expression, expressed at low level in both the central and peripheral nervous system. Moderately expressed in stomach. Low levels in amygdala, kidney, and lung, and small intestine. Trace amounts in cerebellum, dorsal root ganglia, hippocampus, hypothalamus, liver, medulla, pancreas, pituitary, pontine reticular formation, prostate, skeletal muscle and spleen.

The protein resides in the endomembrane system. The protein localises to the endoplasmic reticulum membrane. It is found in the cell membrane. With respect to regulation, activated by SEP-363856 small molecule: IHCH-7179 acts both as an agonist activator for HTR1A and TAAR1. Intracellular G-protein coupled receptor for trace amines, which recognizes endogenous amine-containing metabolites such as beta-phenylethylamine (beta-PEA), 3-iodothyronamine (T1AM), isoamylamine (IAA), cadaverine (CAD), cyclohexylamine (CHA), p-tyramine (p-TYR), trimethylamine (TMA), octopamine and tryptamine. Also functions as a receptor for various drugs and psychoactive substances, such as amphetamine and methamphetamine. Unresponsive to classical biogenic amines, such as epinephrine and histamine and only partially activated by dopamine and serotonin. Expressed in both the central and peripheral nervous system: TAAR1 activation regulates the activity of several neurotransmitter signaling pathways by (1) decreasing the basal firing rates of the neurons involved and by (2) lowering the sensitivity of receptors to neurotransmitters. Ligand binding causes a conformation change that triggers signaling via guanine nucleotide-binding proteins (G proteins) and modulates the activity of downstream effectors. TAAR1 is coupled with different G(i)/G(o)-, G(s)- or G(q)/G(11) classes of G alpha proteins depending on the ligand. CAD-binding is coupled to G(i)/G(o) G alpha proteins and mediates inhibition of adenylate cyclase activity. T1AM- or beta-PEA-binding is coupled to G(s) G alpha proteins and mediates activation of adenylate cyclase activity. CHA- or IAA-binding is coupled to G(q)/G(11) G alpha proteins and activates phospholipase C-beta, releasing diacylglycerol (DAG) and inositol 1,4,5-trisphosphate (IP3) second messengers. TMA-binding is coupled with all three G(i)/G(o)-, G(s)- or G(q)/G(11) G alpha protein subtypes. Amphetamine-binding is coupled with G(s)- or G(12)/G(13) G alpha protein subtypes. The protein is Trace amine-associated receptor 1 of Homo sapiens (Human).